The primary structure comprises 213 residues: Proteasome subunit beta (213 aa).

The propeptide at 1 to 11 is removed in mature form; by autocatalysis; that stretch reads MPEQYQESMTG. Thr12 functions as the Nucleophile in the catalytic mechanism.

It belongs to the peptidase T1B family. As to quaternary structure, the 20S proteasome core is composed of 14 alpha and 14 beta subunits that assemble into four stacked heptameric rings, resulting in a barrel-shaped structure. The two inner rings, each composed of seven catalytic beta subunits, are sandwiched by two outer rings, each composed of seven alpha subunits. The catalytic chamber with the active sites is on the inside of the barrel. Has a gated structure, the ends of the cylinder being occluded by the N-termini of the alpha-subunits. Is capped at one or both ends by the proteasome regulatory ATPase, PAN.

Its subcellular location is the cytoplasm. The enzyme catalyses Cleavage of peptide bonds with very broad specificity.. With respect to regulation, the formation of the proteasomal ATPase PAN-20S proteasome complex, via the docking of the C-termini of PAN into the intersubunit pockets in the alpha-rings, triggers opening of the gate for substrate entry. Interconversion between the open-gate and close-gate conformations leads to a dynamic regulation of the 20S proteasome proteolysis activity. Functionally, component of the proteasome core, a large protease complex with broad specificity involved in protein degradation. This Methanoregula boonei (strain DSM 21154 / JCM 14090 / 6A8) protein is Proteasome subunit beta.